The following is a 231-amino-acid chain: Probable glutathione S-transferase GSTU1 (231 aa).

The GST N-terminal domain occupies 5-84 (KELVLLDFWV…YLDDAFPGTP (80 aa)). Glutathione is bound by residues serine 15, lysine 42, isoleucine 56, and 68 to 69 (ES). One can recognise a GST C-terminal domain in the interval 97–220 (AAYARATARF…LPSPEKVYDF (124 aa)).

This sequence belongs to the GST superfamily. Tau family.

The enzyme catalyses RX + glutathione = an S-substituted glutathione + a halide anion + H(+). Conjugation of reduced glutathione to a wide number of exogenous and endogenous hydrophobic electrophiles. In Oryza sativa subsp. japonica (Rice), this protein is Probable glutathione S-transferase GSTU1 (GSTU1).